We begin with the raw amino-acid sequence, 226 residues long: Thiopurine S-methyltransferase (226 aa).

Positions 16, 51, 72, and 131 each coordinate S-adenosyl-L-methionine.

This sequence belongs to the class I-like SAM-binding methyltransferase superfamily. TPMT family.

It is found in the cytoplasm. The enzyme catalyses S-adenosyl-L-methionine + a thiopurine = S-adenosyl-L-homocysteine + a thiopurine S-methylether.. The polypeptide is Thiopurine S-methyltransferase (Francisella tularensis subsp. novicida (strain U112)).